The chain runs to 494 residues: SNF1-related protein kinase catalytic subunit alpha KIN12 (494 aa).

Residues 19–270 (YRIGKTLGHG…ITEIRQHPWF (252 aa)) enclose the Protein kinase domain. ATP contacts are provided by residues 25-33 (LGHGSFAKV) and Lys-48. The active-site Proton acceptor is Asp-142. Phosphothreonine is present on Thr-175. The auto-inhibitory domain (AID) stretch occupies residues 289-386 (AKKIEEEIIQ…GLKSNVKDDK (98 aa)). The 41-residue stretch at 291-331 (KIEEEIIQNVVNIGFDRNHVVDSLANRIQNEATVAYHLILD) folds into the UBA domain. The segment at 293-494 (EEEIIQNVVN…VAFLRELGVL (202 aa)) is regulatory domain (RD). Residues 387 to 494 (TWTLGLQSQG…VAFLRELGVL (108 aa)) form a PPI region. One can recognise a KA1 domain in the interval 445–493 (AIILPTVIKFEIQLYKVREGKYLLDILRIDGPQFIFFDLCVAFLRELGV).

It belongs to the protein kinase superfamily. CAMK Ser/Thr protein kinase family. SNF1 subfamily. In terms of assembly, subunit of a probable heterotrimeric complex consisting of an alpha catalytic subunit, and a beta (KINB) and a gamma (KING or SNF4) non-catalytic regulatory subunits. In terms of processing, autophosphorylated. Expressed at very low levels.

The enzyme catalyses L-seryl-[protein] + ATP = O-phospho-L-seryl-[protein] + ADP + H(+). It carries out the reaction L-threonyl-[protein] + ATP = O-phospho-L-threonyl-[protein] + ADP + H(+). Activated by phosphorylation at Thr-175. Functionally, catalytic subunit of the probable trimeric SNF1-related protein kinase (SnRK) complex, a central regulator of cellular energy homeostasis, which, in response to seemingly unrelated darkness, sugar and stress conditions, activates energy-producing pathways and inhibits energy-consuming processes. May also be involved in the regulation of fatty acid synthesis by phosphorylation of acetyl-CoA carboxylase and in assimilation of nitrogen by phosphorylating nitrate reductase. This chain is SNF1-related protein kinase catalytic subunit alpha KIN12, found in Arabidopsis thaliana (Mouse-ear cress).